Reading from the N-terminus, the 575-residue chain is uncharacterized protein (575 aa).

Residues 1–120 enclose the HTH marR-type domain; the sequence is MKLIEHYVAL…YNMWLSEVFG (120 aa). Positions 26–49 form a DNA-binding region, H-T-H motif; it reads LTEIADCLFCTERNAKLILHKLEN. Residues 176 to 490 form a solute-binding region region; that stretch reads EPKPHLVHGW…FGFLHLLLSE (315 aa).

The protein in the C-terminal section; belongs to the bacterial solute-binding protein 5 family.

This is an uncharacterized protein from Bacillus subtilis (strain 168).